We begin with the raw amino-acid sequence, 163 residues long: Adenosine 5'-monophosphoramidase HINT2 (163 aa).

Residues 1–17 (MAAAVVLAAGLCVARRA) constitute a mitochondrion transit peptide. Residues 55 to 163 (IFSRILDRSL…GGRQLQWPPG (109 aa)) enclose the HIT domain. S63 and D80 together coordinate AMP. Residue K119 is modified to N6-acetyllysine. N136 contacts AMP. At K139 the chain carries N6-acetyllysine. Residues 142–145 (AQSV) and 149–151 (HIH) contribute to the AMP site. A Histidine triad motif motif is present at residues 147-151 (HLHIH). H149 acts as the Tele-AMP-histidine intermediate in catalysis.

It belongs to the HINT family.

It is found in the mitochondrion. It catalyses the reaction adenosine 5'-phosphoramidate + H2O = AMP + NH4(+). In terms of biological role, exhibits adenosine 5'-monophosphoramidase activity, hydrolyzing purine nucleotide phosphoramidates with a single phosphate group such as adenosine 5'monophosphoramidate (AMP-NH2) to yield AMP and NH2. Hydrolyzes adenosine 5'-O-p-nitrophenylphosphoramidate (AMP-pNA). May be involved in steroid biosynthesis. May play a role in apoptosis. In Bos taurus (Bovine), this protein is Adenosine 5'-monophosphoramidase HINT2.